The primary structure comprises 235 residues: Protein FEV (235 aa).

A DNA-binding region (ETS) is located at residues 58–138 (IQLWQFLLEL…HGKRYAYKFD (81 aa)).

This sequence belongs to the ETS family. Expressed by serotonergic neurons in anterior and posterior raphe.

The protein resides in the nucleus. Functionally, functions as a transcriptional regulator. Functions in the differentiation and the maintenance of the central serotonergic neurons. May play a role in cell growth. This chain is Protein FEV (fev), found in Danio rerio (Zebrafish).